The primary structure comprises 198 residues: MAFAEQSPLTLHRRDLCSRSIWLARKIRSDLTALMESYVKHQGLNKNISLDSVDGVPVASTDRWSEMTEAERLQENLQAYRTFQGMLTKLLEDQRVHFTPTEGDFHQAIHTLTLQVSAFAYQLEELMALLEQKVPEKEADGMPVTIGDGGLFEKKLWGLKVLQELSQWTVRSIHDLRVISSHHMGISAHESHYGAKQM.

It belongs to the CNTF family. In terms of tissue distribution, nervous system.

It is found in the cytoplasm. In terms of biological role, CNTF is a survival factor for various neuronal cell types. Seems to prevent the degeneration of motor axons after axotomy. This chain is Ciliary neurotrophic factor (Cntf), found in Mus musculus (Mouse).